The sequence spans 267 residues: 4-hydroxy-tetrahydrodipicolinate reductase (267 aa).

Residues 8 to 13 (GAAGRM) and glutamate 34 contribute to the NAD(+) site. Arginine 35 contacts NADP(+). NAD(+)-binding positions include 98–100 (GST) and 122–125 (APNM). The Proton donor/acceptor role is filled by histidine 155. Histidine 156 lines the (S)-2,3,4,5-tetrahydrodipicolinate pocket. The Proton donor role is filled by lysine 159. 165 to 166 (GT) contacts (S)-2,3,4,5-tetrahydrodipicolinate.

It belongs to the DapB family.

Its subcellular location is the cytoplasm. It carries out the reaction (S)-2,3,4,5-tetrahydrodipicolinate + NAD(+) + H2O = (2S,4S)-4-hydroxy-2,3,4,5-tetrahydrodipicolinate + NADH + H(+). The catalysed reaction is (S)-2,3,4,5-tetrahydrodipicolinate + NADP(+) + H2O = (2S,4S)-4-hydroxy-2,3,4,5-tetrahydrodipicolinate + NADPH + H(+). Its pathway is amino-acid biosynthesis; L-lysine biosynthesis via DAP pathway; (S)-tetrahydrodipicolinate from L-aspartate: step 4/4. Functionally, catalyzes the conversion of 4-hydroxy-tetrahydrodipicolinate (HTPA) to tetrahydrodipicolinate. In Pelobacter propionicus (strain DSM 2379 / NBRC 103807 / OttBd1), this protein is 4-hydroxy-tetrahydrodipicolinate reductase.